The primary structure comprises 439 residues: MKTETDFFDQATIVVRAGNGGNGAATFRREKYVPRGGPNGGDGGRGGHVYLIADPEYNTLLHFRYQRKFVAENGGHGGKNAMHGRNGTDVYVPVPPGTVVRATIDGVTYSVDLARPGQRLLAARGGRGGLGNIHFATSTRQAPRLAELGEPGQELTLELELKMLADVGLVGFPNAGKSTLLSVISAARPKIAAYPFTTLTPNLGIVEVGLQRFVVADIPGLIEGAHAGVGLGHDFLRHVERTRLLIHIIDAAGVDGRYPWDDYEQINTELRLYQPELAQRKQVVALNKADLPAAQENLPILRERLPVAPEDLFVISAATGEGIEPLLRRVADLLRADPPPQRDPVDPDEPPLQWPLPEVDENAFTIEREGEAFRVRGIKIERLIAMSNLDQDEALDRIQRVLEASGINEALIAAGVQDGDLVRIGRAELVWDDSGQHAL.

In terms of domain architecture, Obg spans 5 to 164; that stretch reads TDFFDQATIV…LTLELELKML (160 aa). Positions 165-335 constitute an OBG-type G domain; that stretch reads ADVGLVGFPN…LLRRVADLLR (171 aa). Residues 171–178, 196–200, 217–220, 287–290, and 316–318 contribute to the GTP site; these read GFPNAGKS, FTTLT, DIPG, NKAD, and SAA. Residues Ser178 and Thr198 each coordinate Mg(2+). An OCT domain is found at 356 to 433; that stretch reads LPEVDENAFT…IGRAELVWDD (78 aa).

The protein belongs to the TRAFAC class OBG-HflX-like GTPase superfamily. OBG GTPase family. As to quaternary structure, monomer. It depends on Mg(2+) as a cofactor.

Its subcellular location is the cytoplasm. Functionally, an essential GTPase which binds GTP, GDP and possibly (p)ppGpp with moderate affinity, with high nucleotide exchange rates and a fairly low GTP hydrolysis rate. Plays a role in control of the cell cycle, stress response, ribosome biogenesis and in those bacteria that undergo differentiation, in morphogenesis control. The polypeptide is GTPase Obg (Chloroflexus aurantiacus (strain ATCC 29364 / DSM 637 / Y-400-fl)).